The chain runs to 219 residues: MQAYKKDFLDLATKYEALKFGSFTLKSGRTSPYFFNLGLFNTGVALSTVGASFAQVIINSGVEFDVIFGPAYKGIPLAAVTAAKIAELGGEKYATKEYAFNRKEAKDHGEGGNIVGASLKGKKVLIIDDVITAGTAIKEAFSIIDANGATVSAVVIALDRQETTVDSPKSAVQVVSQTYNVPVLNIFNLNDVIQYTDGILTEDEKKKIEQYRDQYSPKE.

5-phospho-alpha-D-ribose 1-diphosphate is bound at residue Lys-26. 34 to 35 contacts orotate; that stretch reads FF. 5-phospho-alpha-D-ribose 1-diphosphate is bound by residues 72–73, Arg-102, Lys-103, Lys-106, His-108, and 128–136; these read YK and DDVITAGTA. Thr-132 and Arg-160 together coordinate orotate.

Belongs to the purine/pyrimidine phosphoribosyltransferase family. PyrE subfamily. In terms of assembly, homodimer.

The enzyme catalyses orotidine 5'-phosphate + diphosphate = orotate + 5-phospho-alpha-D-ribose 1-diphosphate. It participates in pyrimidine metabolism; UMP biosynthesis via de novo pathway; UMP from orotate: step 1/2. Functionally, catalyzes the transfer of a ribosyl phosphate group from 5-phosphoribose 1-diphosphate to orotate, leading to the formation of orotidine monophosphate (OMP). The sequence is that of Orotate phosphoribosyltransferase (URA5) from Yarrowia lipolytica (strain CLIB 122 / E 150) (Yeast).